Here is a 110-residue protein sequence, read N- to C-terminus: Iron-sulfur cluster assembly protein CyaY (110 aa).

This sequence belongs to the frataxin family.

Involved in iron-sulfur (Fe-S) cluster assembly. May act as a regulator of Fe-S biogenesis. This Pseudomonas entomophila (strain L48) protein is Iron-sulfur cluster assembly protein CyaY.